Consider the following 97-residue polypeptide: Small ribosomal subunit protein bS6 (97 aa).

Belongs to the bacterial ribosomal protein bS6 family.

In terms of biological role, binds together with bS18 to 16S ribosomal RNA. This chain is Small ribosomal subunit protein bS6, found in Limosilactobacillus fermentum (strain NBRC 3956 / LMG 18251) (Lactobacillus fermentum).